A 118-amino-acid polypeptide reads, in one-letter code: Nucleoid-associated protein CTN_1899 (118 aa).

The protein belongs to the YbaB/EbfC family. Homodimer.

It localises to the cytoplasm. It is found in the nucleoid. Its function is as follows. Binds to DNA and alters its conformation. May be involved in regulation of gene expression, nucleoid organization and DNA protection. In Thermotoga neapolitana (strain ATCC 49049 / DSM 4359 / NBRC 107923 / NS-E), this protein is Nucleoid-associated protein CTN_1899.